Here is a 180-residue protein sequence, read N- to C-terminus: Large ribosomal subunit protein uL6 (180 aa).

Belongs to the universal ribosomal protein uL6 family. As to quaternary structure, part of the 50S ribosomal subunit.

In terms of biological role, this protein binds to the 23S rRNA, and is important in its secondary structure. It is located near the subunit interface in the base of the L7/L12 stalk, and near the tRNA binding site of the peptidyltransferase center. The polypeptide is Large ribosomal subunit protein uL6 (Salinispora tropica (strain ATCC BAA-916 / DSM 44818 / JCM 13857 / NBRC 105044 / CNB-440)).